The sequence spans 334 residues: rRNA 2'-O-methyltransferase fibrillarin (334 aa).

Over residues 1–93 (MEGRGGSRGG…GGKPAAGGKP (93 aa)) the composition is skewed to gly residues. Residues 1 to 94 (MEGRGGSRGG…GKPAAGGKPG (94 aa)) are disordered. Residues 184-185 (TT), 203-204 (EL), 228-229 (DA), and 248-251 (DVAQ) each bind S-adenosyl-L-methionine.

Belongs to the methyltransferase superfamily. Fibrillarin family. In terms of assembly, component of box C/D small nucleolar ribonucleoprotein (snoRNP) particles. It is associated with the U3, U8 and U13 small nuclear RNAs. Part of the small subunit (SSU) processome, composed of more than 70 proteins and the RNA chaperone small nucleolar RNA (snoRNA) U3. In terms of processing, by homology to other fibrillarins, some or all of the N-terminal domain arginines are modified to asymmetric dimethylarginine (DMA).

It is found in the nucleus. Its subcellular location is the nucleolus. The enzyme catalyses L-glutaminyl-[histone H2A] + S-adenosyl-L-methionine = N(5)-methyl-L-glutaminyl-[histone H2A] + S-adenosyl-L-homocysteine + H(+). Its function is as follows. S-adenosyl-L-methionine-dependent methyltransferase that has the ability to methylate both RNAs and proteins. Involved in pre-rRNA processing. Utilizes the methyl donor S-adenosyl-L-methionine to catalyze the site-specific 2'-hydroxyl methylation of ribose moieties in pre-ribosomal RNA. Site specificity is provided by a guide RNA that base pairs with the substrate. Methylation occurs at a characteristic distance from the sequence involved in base pairing with the guide RNA. Also acts as a protein methyltransferase by mediating methylation of 'Gln-105' of histone H2A (H2AQ105me), a modification that impairs binding of the FACT complex and is specifically present at 35S ribosomal DNA locus. Part of the small subunit (SSU) processome, first precursor of the small eukaryotic ribosomal subunit. During the assembly of the SSU processome in the nucleolus, many ribosome biogenesis factors, an RNA chaperone and ribosomal proteins associate with the nascent pre-rRNA and work in concert to generate RNA folding, modifications, rearrangements and cleavage as well as targeted degradation of pre-ribosomal RNA by the RNA exosome. The chain is rRNA 2'-O-methyltransferase fibrillarin (fbl) from Dictyostelium discoideum (Social amoeba).